The chain runs to 437 residues: Elongation factor 1-gamma (437 aa).

Ala-2 bears the N-acetylalanine mark. The GST N-terminal domain maps to 2-87 (AAGTLYTYPE…YVSNEELRGS (86 aa)). Residues 88 to 216 (TPEAAAQVVQ…VKLCEKMAQF (129 aa)) form the GST C-terminal domain. Lys-147 and Lys-212 each carry N6-acetyllysine. Residues 221 to 254 (FAETQPKKDTPRKEKGSREEKQKPQAERKEEKKA) show a composition bias toward basic and acidic residues. Residues 221–268 (FAETQPKKDTPRKEKGSREEKQKPQAERKEEKKAAAPAPEEEMDECEQ) are disordered. A Glycyl lysine isopeptide (Lys-Gly) (interchain with G-Cter in SUMO1) cross-link involves residue Lys-253. One can recognise an EF-1-gamma C-terminal domain in the interval 276–437 (AKDPFAHLPK…KAFNQGKIFK (162 aa)). Lys-285 participates in a covalent cross-link: Glycyl lysine isopeptide (Lys-Gly) (interchain with G-Cter in SUMO2). At Lys-401 the chain carries N6-acetyllysine. Lys-434 is modified (N6-acetyllysine; alternate). At Lys-434 the chain carries N6-malonyllysine; alternate.

EF-1 is composed of four subunits: alpha, beta, delta, and gamma.

Probably plays a role in anchoring the complex to other cellular components. In Macaca fascicularis (Crab-eating macaque), this protein is Elongation factor 1-gamma (EEF1G).